A 293-amino-acid polypeptide reads, in one-letter code: Glycine--tRNA ligase alpha subunit (293 aa).

This sequence belongs to the class-II aminoacyl-tRNA synthetase family. Tetramer of two alpha and two beta subunits.

It is found in the cytoplasm. The enzyme catalyses tRNA(Gly) + glycine + ATP = glycyl-tRNA(Gly) + AMP + diphosphate. This is Glycine--tRNA ligase alpha subunit from Wolinella succinogenes (strain ATCC 29543 / DSM 1740 / CCUG 13145 / JCM 31913 / LMG 7466 / NCTC 11488 / FDC 602W) (Vibrio succinogenes).